The sequence spans 431 residues: Nuclear bridge Ish domain protein les1 (431 aa).

An N-terminal signal peptide occupies residues 1–21 (MQPRFLLHGALLALGIQLCLS).

Its subcellular location is the nucleus inner membrane. Its function is as follows. Inner nuclear envelope protein involved in nuclear fission, which is achieved via local disassembly of nuclear pores within the narrow bridge that links segregating daughter nuclei. Les1 restricts the process of local nuclear envelope breakdown to the bridge midzone to prevent the leakage of material from daughter nuclei during mitosis. The chain is Nuclear bridge Ish domain protein les1 from Schizosaccharomyces pombe (strain 972 / ATCC 24843) (Fission yeast).